A 224-amino-acid chain; its full sequence is ATP-dependent dethiobiotin synthetase BioD (224 aa).

N13–I18 lines the ATP pocket. Residue T17 participates in Mg(2+) binding. The active site involves K38. A substrate-binding site is contributed by S42. ATP is bound by residues D55, E116–G119, N176–N177, and N211. Mg(2+) contacts are provided by D55 and E116.

It belongs to the dethiobiotin synthetase family. As to quaternary structure, homodimer. Requires Mg(2+) as cofactor.

Its subcellular location is the cytoplasm. The catalysed reaction is (7R,8S)-7,8-diammoniononanoate + CO2 + ATP = (4R,5S)-dethiobiotin + ADP + phosphate + 3 H(+). It participates in cofactor biosynthesis; biotin biosynthesis; biotin from 7,8-diaminononanoate: step 1/2. Functionally, catalyzes a mechanistically unusual reaction, the ATP-dependent insertion of CO2 between the N7 and N8 nitrogen atoms of 7,8-diaminopelargonic acid (DAPA, also called 7,8-diammoniononanoate) to form a ureido ring. The polypeptide is ATP-dependent dethiobiotin synthetase BioD (Buchnera aphidicola subsp. Acyrthosiphon pisum (strain APS) (Acyrthosiphon pisum symbiotic bacterium)).